The chain runs to 101 residues: Small ribosomal subunit protein uS14 (101 aa).

This sequence belongs to the universal ribosomal protein uS14 family. Part of the 30S ribosomal subunit. Contacts proteins S3 and S10.

Functionally, binds 16S rRNA, required for the assembly of 30S particles and may also be responsible for determining the conformation of the 16S rRNA at the A site. This is Small ribosomal subunit protein uS14 from Shewanella woodyi (strain ATCC 51908 / MS32).